Here is a 219-residue protein sequence, read N- to C-terminus: Leucyl/phenylalanyl-tRNA--protein transferase (219 aa).

Belongs to the L/F-transferase family.

It is found in the cytoplasm. The catalysed reaction is N-terminal L-lysyl-[protein] + L-leucyl-tRNA(Leu) = N-terminal L-leucyl-L-lysyl-[protein] + tRNA(Leu) + H(+). It carries out the reaction N-terminal L-arginyl-[protein] + L-leucyl-tRNA(Leu) = N-terminal L-leucyl-L-arginyl-[protein] + tRNA(Leu) + H(+). The enzyme catalyses L-phenylalanyl-tRNA(Phe) + an N-terminal L-alpha-aminoacyl-[protein] = an N-terminal L-phenylalanyl-L-alpha-aminoacyl-[protein] + tRNA(Phe). Functionally, functions in the N-end rule pathway of protein degradation where it conjugates Leu, Phe and, less efficiently, Met from aminoacyl-tRNAs to the N-termini of proteins containing an N-terminal arginine or lysine. In Leptospira interrogans serogroup Icterohaemorrhagiae serovar copenhageni (strain Fiocruz L1-130), this protein is Leucyl/phenylalanyl-tRNA--protein transferase.